Reading from the N-terminus, the 130-residue chain is Flagellar assembly factor FliW (130 aa).

This sequence belongs to the FliW family. As to quaternary structure, interacts with translational regulator CsrA and flagellin(s).

Its subcellular location is the cytoplasm. Its function is as follows. Acts as an anti-CsrA protein, binds CsrA and prevents it from repressing translation of its target genes, one of which is flagellin. Binds to flagellin and participates in the assembly of the flagellum. The protein is Flagellar assembly factor FliW of Clostridioides difficile (strain 630) (Peptoclostridium difficile).